Here is a 283-residue protein sequence, read N- to C-terminus: NADPH-dependent 7-cyano-7-deazaguanine reductase (283 aa).

90–92 contacts substrate; it reads IES. 92–93 lines the NADPH pocket; that stretch reads SK. Cys-190 (thioimide intermediate) is an active-site residue. Asp-197 acts as the Proton donor in catalysis. 229 to 230 serves as a coordination point for substrate; that stretch reads HE. Residue 258 to 259 participates in NADPH binding; it reads RG.

It belongs to the GTP cyclohydrolase I family. QueF type 2 subfamily. Homodimer.

Its subcellular location is the cytoplasm. It carries out the reaction 7-aminomethyl-7-carbaguanine + 2 NADP(+) = 7-cyano-7-deazaguanine + 2 NADPH + 3 H(+). It functions in the pathway tRNA modification; tRNA-queuosine biosynthesis. In terms of biological role, catalyzes the NADPH-dependent reduction of 7-cyano-7-deazaguanine (preQ0) to 7-aminomethyl-7-deazaguanine (preQ1). This Dechloromonas aromatica (strain RCB) protein is NADPH-dependent 7-cyano-7-deazaguanine reductase.